The following is a 658-amino-acid chain: L-type lectin-domain containing receptor kinase V.4 (658 aa).

The N-terminal stretch at M1–G25 is a signal peptide. Residues K26–F248 are legume-lectin like. The Extracellular portion of the chain corresponds to K26 to L280. N-linked (GlcNAc...) asparagine glycans are attached at residues N66 and N196. The chain crosses the membrane as a helical span at residues V281–F301. The Cytoplasmic portion of the chain corresponds to Y302–R658. The Protein kinase domain maps to K334–V592. Residues L340 to V348 and K363 contribute to the ATP site. D460 acts as the Proton acceptor in catalysis.

This sequence in the C-terminal section; belongs to the protein kinase superfamily. Ser/Thr protein kinase family. In the N-terminal section; belongs to the leguminous lectin family.

Its subcellular location is the cell membrane. The enzyme catalyses L-seryl-[protein] + ATP = O-phospho-L-seryl-[protein] + ADP + H(+). It catalyses the reaction L-threonyl-[protein] + ATP = O-phospho-L-threonyl-[protein] + ADP + H(+). Functionally, involved in resistance response to the pathogenic oomycetes Phytophthora infestans and Phytophthora capsici and to the pathogenic bacteria Pseudomonas syringae. This Arabidopsis thaliana (Mouse-ear cress) protein is L-type lectin-domain containing receptor kinase V.4.